The sequence spans 158 residues: 2-C-methyl-D-erythritol 2,4-cyclodiphosphate synthase (158 aa).

A divalent metal cation-binding residues include aspartate 9 and histidine 11. Residues 9 to 11 (DVH) and 35 to 36 (HS) contribute to the 4-CDP-2-C-methyl-D-erythritol 2-phosphate site. Residue histidine 43 participates in a divalent metal cation binding. 4-CDP-2-C-methyl-D-erythritol 2-phosphate is bound by residues 57–59 (DIG), 62–66 (FPDTD), 101–107 (AQAPKMA), 133–136 (TTTE), phenylalanine 140, and arginine 143.

This sequence belongs to the IspF family. Homotrimer. It depends on a divalent metal cation as a cofactor.

The enzyme catalyses 4-CDP-2-C-methyl-D-erythritol 2-phosphate = 2-C-methyl-D-erythritol 2,4-cyclic diphosphate + CMP. The protein operates within isoprenoid biosynthesis; isopentenyl diphosphate biosynthesis via DXP pathway; isopentenyl diphosphate from 1-deoxy-D-xylulose 5-phosphate: step 4/6. Its function is as follows. Involved in the biosynthesis of isopentenyl diphosphate (IPP) and dimethylallyl diphosphate (DMAPP), two major building blocks of isoprenoid compounds. Catalyzes the conversion of 4-diphosphocytidyl-2-C-methyl-D-erythritol 2-phosphate (CDP-ME2P) to 2-C-methyl-D-erythritol 2,4-cyclodiphosphate (ME-CPP) with a corresponding release of cytidine 5-monophosphate (CMP). The sequence is that of 2-C-methyl-D-erythritol 2,4-cyclodiphosphate synthase from Vibrio vulnificus (strain YJ016).